Consider the following 398-residue polypeptide: G2/mitotic-specific cyclin-B2 (398 aa).

A Phosphothreonine modification is found at Thr8. 3 positions are modified to phosphoserine: Ser11, Ser77, and Ser92. Thr94 is modified (phosphothreonine). 3 positions are modified to phosphoserine: Ser99, Ser392, and Ser398.

Belongs to the cyclin family. Cyclin AB subfamily. In terms of assembly, interacts with the CDK1 protein kinase to form a serine/threonine kinase holoenzyme complex also known as maturation promoting factor (MPF). The cyclin subunit imparts substrate specificity to the complex.

Essential for the control of the cell cycle at the G2/M (mitosis) transition. In Homo sapiens (Human), this protein is G2/mitotic-specific cyclin-B2 (CCNB2).